Consider the following 235-residue polypeptide: Probable transcriptional regulatory protein Ccon26_04940 (235 aa).

It belongs to the TACO1 family.

The protein localises to the cytoplasm. This is Probable transcriptional regulatory protein Ccon26_04940 from Campylobacter concisus (strain 13826).